A 487-amino-acid chain; its full sequence is Betaine aldehyde dehydrogenase 1 (487 aa).

The K(+) site is built by S26, I27, and D93. 150 to 152 is an NAD(+) binding site; it reads GAW. Residue K162 is the Charge relay system of the active site. Residues 176–179 and 229–232 contribute to the NAD(+) site; these read KPSE and SVPT. L244 provides a ligand contact to K(+). The active-site Proton acceptor is the E250. NAD(+)-binding residues include G252, C284, and E384. C284 serves as the catalytic Nucleophile. C284 is subject to Cysteine sulfenic acid (-SOH). Positions 454 and 457 each coordinate K(+). The Charge relay system role is filled by E461.

Belongs to the aldehyde dehydrogenase family. In terms of assembly, dimer of dimers. The cofactor is K(+).

The enzyme catalyses betaine aldehyde + NAD(+) + H2O = glycine betaine + NADH + 2 H(+). It participates in amine and polyamine biosynthesis; betaine biosynthesis via choline pathway; betaine from betaine aldehyde: step 1/1. Its function is as follows. Involved in the biosynthesis of the osmoprotectant glycine betaine. Catalyzes the irreversible oxidation of betaine aldehyde to the corresponding acid. The sequence is that of Betaine aldehyde dehydrogenase 1 from Rhizobium meliloti (strain 1021) (Ensifer meliloti).